We begin with the raw amino-acid sequence, 296 residues long: MFS-type transporter pytF (296 aa).

7 helical membrane passes run 30–50 (WLVVLGGFLAYFVTFGMLNSF), 72–92 (WIGSLQLFLLFIGGLFFGPVF), 98–118 (KVLFIPGTLLLSLSQMMVSLC), 124–144 (FILAQSLLFGIAVAMLFYPTI), 157–177 (LAMGIVLTGSSLGGIAWPLIL), 180–200 (LFAVVGFPWGLRIVGFISFAL), and 238–258 (VVGMLFVIWGMFIPFYYIPLF). N265 carries N-linked (GlcNAc...) asparagine glycosylation. The helical transmembrane segment at 271–291 (SLISILNAGSFVGRIVSGALA) threads the bilayer.

It belongs to the major facilitator superfamily. Monocarboxylate porter (TC 2.A.1.13) family.

The protein localises to the cell membrane. Its function is as follows. MFS-type transporter; part of the gene cluster that mediates the biosynthesis of pyranterreones, a family of antioxidative compounds. Directly involved in the secretion of pyranterreones. This is MFS-type transporter pytF from Aspergillus terreus (strain NIH 2624 / FGSC A1156).